The primary structure comprises 132 residues: MDRRPLTWALVLLGPALAIALGPAAAQEAPEKLCGHHFVRALVRLCGGPRWSSEEDGRPVAGGDRELLRWLEGQHLLHGLMASGDPVLVLAPQPLPQASRHHHHRRATAINPARHCCLSGCTRQDLLTLCPH.

The first 21 residues, 1 to 21 (MDRRPLTWALVLLGPALAIAL), serve as a signal peptide directing secretion. Gln27 carries the post-translational modification Pyrrolidone carboxylic acid. Cystine bridges form between Cys34/Cys117, Cys46/Cys130, and Cys116/Cys121. Positions 67–104 (LLRWLEGQHLLHGLMASGDPVLVLAPQPLPQASRHHHH) are cleaved as a propeptide — c peptide like.

This sequence belongs to the insulin family. As to quaternary structure, heterodimer of a B chain and an A chain linked by two disulfide bonds. 20% of B chains include an extra N-terminal pentapeptide. As to expression, expressed exclusively in Leydig cells of the testis.

It is found in the secreted. Its function is as follows. Seems to play a role in testicular function. May be a trophic hormone with a role in testicular descent in fetal life. Is a ligand for LGR8 receptor. The protein is Insulin-like 3 (INSL3) of Bos taurus (Bovine).